A 482-amino-acid polypeptide reads, in one-letter code: MNKSRAPPDARIQKMRELEERLANLKADRKVEQKMVAVAEFEARTTKKIVGNLVQQRYDALKARAEADLNARRQRLADKLDAEDLAMRQELLASKKTPEQRRAELAERARALAATREAERQALASTLYEKAFIQSCDVLRDENSKRILYRTIEERNAQIEHKMAQRIMEAEEKRMWHEMSEVERQKMEQRYLDDKRRDREKREEVLRILDEQVRQVNARRAEASMLRRAEIAELNATWRQMAADQEAADVQERENMKKLAAELQEFNRIKQMEISEAERSERELDLKILQEALSKEAADEAAELAFRERRREEMRRYREQLALMMEKEREETAERDALILKAQLEQEAKRDAELAARDEARRQLMAQVDAIRQIQIQEKLAKRLERAEEKAFERAQMAEEVAKAESDAAAKDAADRKAGIQRRLELQTMMVAKAHMKAAELDEKLAEGEATKRVEDQFKAKVNQTLSSTDPPVWHGRRKFDW.

Coiled-coil stretches lie at residues 9–40 (DARIQKMRELEERLANLKADRKVEQKMVAVAE), 67–124 (ADLN…QALA), and 152–413 (IEER…AKDA). Residues 462 to 482 (VNQTLSSTDPPVWHGRRKFDW) are disordered.

It belongs to the CFAP53 family.

Its subcellular location is the cell projection. The protein localises to the cilium. The protein resides in the flagellum. Functionally, may play a role in filopodium movement. The polypeptide is Cilia- and flagella-associated protein 53 (Chlamydomonas reinhardtii (Chlamydomonas smithii)).